The sequence spans 170 residues: ATP synthase subunit b, chloroplastic (170 aa).

A helical transmembrane segment spans residues 15–35; that stretch reads ILETNVINLAVVVGVVVFFVG.

The protein belongs to the ATPase B chain family. As to quaternary structure, F-type ATPases have 2 components, F(1) - the catalytic core - and F(0) - the membrane proton channel. F(1) has five subunits: alpha(3), beta(3), gamma(1), delta(1), epsilon(1). F(0) has four main subunits: a(1), b(1), b'(1) and c(10-14). The alpha and beta chains form an alternating ring which encloses part of the gamma chain. F(1) is attached to F(0) by a central stalk formed by the gamma and epsilon chains, while a peripheral stalk is formed by the delta, b and b' chains.

It is found in the plastid. The protein resides in the chloroplast thylakoid membrane. F(1)F(0) ATP synthase produces ATP from ADP in the presence of a proton or sodium gradient. F-type ATPases consist of two structural domains, F(1) containing the extramembraneous catalytic core and F(0) containing the membrane proton channel, linked together by a central stalk and a peripheral stalk. During catalysis, ATP synthesis in the catalytic domain of F(1) is coupled via a rotary mechanism of the central stalk subunits to proton translocation. In terms of biological role, component of the F(0) channel, it forms part of the peripheral stalk, linking F(1) to F(0). This chain is ATP synthase subunit b, chloroplastic, found in Stigeoclonium helveticum (Green alga).